Here is a 912-residue protein sequence, read N- to C-terminus: WD repeat-containing protein 44 (912 aa).

3 disordered regions span residues 206-352, 399-426, and 460-481; these read DIIE…ELTD, SNDAAQSDDEEKPQSHQSETDGGKLKQK, and RDEVFHTDQDDPSSSDDEGMPY. Pro residues predominate over residues 236 to 258; it reads NRPPQPINAPPPRPPPPARPAPP. Basic and acidic residues predominate over residues 264–278; sequence GDTDFDRSSGFEYQK. The span at 288–311 shows a compositional bias: polar residues; sequence SPNTLTENMNRDSQPSLDLASATS. The span at 410–422 shows a compositional bias: basic and acidic residues; the sequence is KPQSHQSETDGGK. Residues 469-478 show a composition bias toward acidic residues; it reads DDPSSSDDEG. The stretch at 511 to 550 is one WD 1 repeat; the sequence is EHVGAVWTMKFSHCGRLLASAGQDNVVRIWVLKNAFDYFN. The tract at residues 559-594 is disordered; the sequence is EGRVSPSPSQESLNSSKSDTDGGVFSGTDDVDPDDK. Residues 563–575 show a composition bias toward low complexity; it reads SPSPSQESLNSSK. WD repeat units lie at residues 608-646, 648-688, 693-732, 743-782, 787-826, 841-880, and 882-912; these read GHTADLLDLSWSKNYFLLSSSMDKTVRLWHISRRECLCC, QHID…VALW, GQTKLITAANFCQNGKHAVIGTYDGRCIFYDTEHLKYHTQ, RVGRKITGIEPLPGENKILVTSNDSRIRLYDLRDLSLSMK, VNSSSQIKASFSHDFTYIVSGSEDKYVYIWSTYHDLSKFT, AHNAVVTSAIFAPNPGLMVSAETSSEKQEGDQAEPVENIP, and GALKSDHTEVLLSADFTGAIKVFINKKKNIS. The interval 861-882 is disordered; the sequence is AETSSEKQEGDQAEPVENIPSG.

It is found in the cytoplasm. The protein localises to the cytosol. The protein resides in the perinuclear region. It localises to the endosome membrane. Its subcellular location is the golgi apparatus. It is found in the trans-Golgi network. Its function is as follows. Downstream effector for rab11. May be involved in vesicle recycling. May also be involved in the inhibition of the intracellular ciliogenesis pathway. This chain is WD repeat-containing protein 44 (wdr44), found in Xenopus laevis (African clawed frog).